Here is a 654-residue protein sequence, read N- to C-terminus: Tetratricopeptide repeat protein 30 homolog (654 aa).

TPR repeat units lie at residues 10-43 (DGEY…STTR), 44-76 (AGLS…VPDV), 145-178 (ASTK…GGFN), 180-212 (HVAY…GIRN), 393-426 (CRSA…RAWI), 452-485 (SWRL…NYDD), and 535-568 (CIVN…GSGA).

It belongs to the TTC30/dfy-1/fleer family.

The protein localises to the cell projection. The protein resides in the cilium. Functionally, required for polyglutamylation of axonemal tubulin in sensory cilia. Plays a role in anterograde intraflagellar transport (IFT), the process by which cilia precursors are transported from the base of the cilium to the site of their incorporation at the tip. This is Tetratricopeptide repeat protein 30 homolog from Anopheles gambiae (African malaria mosquito).